A 157-amino-acid chain; its full sequence is Probable succinate transporter subunit YjjB (157 aa).

The next 4 membrane-spanning stretches (helical) occupy residues 15-35 (ILAA…VQAL), 50-70 (MILM…SMLV), 87-107 (VFTV…TAMI), and 121-141 (LMIT…ALSV).

It belongs to the ThrE exporter (TC 2.A.79) family. In terms of assembly, the transporter is composed of YjjB and YjjP.

The protein resides in the cell inner membrane. Its function is as follows. Involved in succinate export with YjjP. Both proteins are required for export. The polypeptide is Probable succinate transporter subunit YjjB (Shigella dysenteriae serotype 1 (strain Sd197)).